The chain runs to 227 residues: Lysosomal-associated transmembrane protein 4B (227 aa).

Transmembrane regions (helical) follow at residues 26–46 (ILLGVWYLIINAVVLLILLSA), 72–92 (MCIAIAISLLMILICAMATYG), 100–120 (WIIPFFCYQIFDFALNTLVAI), and 153–173 (CLVLIILLFIGILLTLKGYLI). The interval 205–222 (PPYDDATAVPSTAKEPPP) is required for NEDD4 interaction.

Belongs to the LAPTM4/LAPTM5 transporter family. In terms of assembly, homooligomer; upon reaching the lysosomes. Interacts with MCOLN1. Interacts with NEDD4; may play a role in the lysosomal sorting of LAPTM4B; enhances HGS association with NEDD4; mediates inhibition of EGFR degradation. Interacts with PIP5K1C; promotes SNX5 association with LAPTM4B; kinase activity of PIP5K1C is required; interaction is regulated by phosphatidylinositol 4,5-bisphosphate generated by PIP5K1C. Interacts with HGS; promotes HGS ubiquitination. Interacts with SNX5. Interacts with SLC3A2 and SLC7A5; recruits SLC3A2 and SLC7A5 to lysosomes to promote leucine uptake into these organelles and is required for mTORC1 activation. Interacts with LRRC32; decreases TGFB1 production in regulatory T cells. Interacts with BECN1; competes with EGFR for LAPTM4B binding; regulates EGFR activity. Interacts with EGFR; positively correlates with EGFR activation. In terms of processing, undergoes proteolytic cleavage following delivery to the lysosomes. Ubiquitinated by NEDD4.

It is found in the endomembrane system. It localises to the late endosome membrane. Its subcellular location is the cell membrane. The protein localises to the cell projection. The protein resides in the lysosome membrane. It is found in the endosome membrane. It localises to the endosome. Its subcellular location is the multivesicular body membrane. The protein localises to the multivesicular body lumen. Its function is as follows. Required for optimal lysosomal function. Blocks EGF-stimulated EGFR intraluminal sorting and degradation. Conversely by binding with the phosphatidylinositol 4,5-bisphosphate, regulates its PIP5K1C interaction, inhibits HGS ubiquitination and relieves LAPTM4B inhibition of EGFR degradation. Recruits SLC3A2 and SLC7A5 (the Leu transporter) to the lysosome, promoting entry of leucine and other essential amino acid (EAA) into the lysosome, stimulating activation of proton-transporting vacuolar (V)-ATPase protein pump (V-ATPase) and hence mTORC1 activation. Plays a role as negative regulator of TGFB1 production in regulatory T cells. Binds ceramide and facilitates its exit from late endosome in order to control cell death pathways. The sequence is that of Lysosomal-associated transmembrane protein 4B from Mus musculus (Mouse).